The sequence spans 1558 residues: Arginine-glutamic acid dipeptide repeats protein (1558 aa).

Over residues 1–36 (MTADKDKDKDKEKDRDRDRDRERDKRDKARESENAR) the composition is skewed to basic and acidic residues. The disordered stretch occupies residues 1-90 (MTADKDKDKD…KKKSRYERTD (90 aa)). Phosphoserine occurs at positions 53 and 56. Residues 74–85 (KSRKKPPKKKSR) are compositionally biased toward basic residues. In terms of domain architecture, BAH spans 103-283 (VVYRPGDCVY…PETRRLNSTQ (181 aa)). Thr-120 bears the Phosphothreonine mark. Residues Ser-142 and Ser-304 each carry the phosphoserine modification. Residues 284–387 (GEIRVGPSHQ…KALQRLVKKP (104 aa)) form the ELM2 domain. An SANT domain is found at 391 to 443 (LIEKCWTEDEVKRFVKGLRQYGKNFFRIRKELLPSKETGELITFYYYWKKTPE). The segment at 464–495 (TRTASTPVNTPSRPPSSEFLDLSSASEDDFDS) is disordered. The segment covering 465–474 (RTASTPVNTP) has biased composition (polar residues). Residues 479 to 488 (SSEFLDLSSA) show a composition bias toward low complexity. The GATA-type zinc finger occupies 507–532 (CRHCFTTTSKDWHHGGRENILLCTDC). The segment at 542-1125 (LPPIEKPVDP…PSHASQSARF (584 aa)) is disordered. Residue Lys-560 forms a Glycyl lysine isopeptide (Lys-Gly) (interchain with G-Cter in SUMO2) linkage. Thr-593 carries the post-translational modification Phosphothreonine. Ser-594, Ser-600, and Ser-613 each carry phosphoserine. Residues 609 to 623 (SGRNSPSAASTSSND) are compositionally biased toward low complexity. The span at 624–640 (SKAETVKKSAKKVKEEA) shows a compositional bias: basic and acidic residues. Residue Lys-637 forms a Glycyl lysine isopeptide (Lys-Gly) (interchain with G-Cter in SUMO2) linkage. Phosphoserine is present on residues Ser-642, Ser-656, Ser-675, and Ser-679. A compositionally biased stretch (basic and acidic residues) spans 652 to 673 (EKVASDTEDTDRITSKKTKTQE). The segment covering 688-708 (SDSRSVNDEGSSDPKDIDQDN) has biased composition (basic and acidic residues). Residues 709–720 (RSTSPSIPSPQD) are compositionally biased toward polar residues. The span at 726–752 (DSSAQQQMLQAQPPALQAPSGAASAPS) shows a compositional bias: low complexity. A compositionally biased stretch (polar residues) spans 778–792 (SPATSQPPNQTQSTV). Over residues 806–823 (LHPPRLPSPHPPLQPMTA) the composition is skewed to pro residues. Composition is skewed to low complexity over residues 824 to 857 (PPSQSSAQPHPQPSLHSQGPPGPHSLQTGPLLQH), 865 to 874 (GLPSQPSQGQ), and 891 to 901 (QLPASQSALQP). The segment covering 902-932 (QQPPREQPLPPAPLAMPHIKPPPTTPIPQLP) has biased composition (pro residues). Low complexity predominate over residues 962 to 972 (KPLSSLSTHHP). Residues 1012-1023 (HPTTGLHQVPSQ) are compositionally biased toward polar residues. A compositionally biased stretch (pro residues) spans 1027 to 1053 (PQHPFVPGGPPPITPPSCPPTSTPPAG). Over residues 1054 to 1077 (PSSSSQPPCSAAVSSGGSVPGAPS) the composition is skewed to low complexity. Phosphoserine is present on residues Ser-1098, Ser-1105, and Ser-1107. The span at 1098-1109 (SPPPPPRSPSPE) shows a compositional bias: pro residues. Phosphothreonine is present on Thr-1111. Residues 1148-1203 (GSKLAKKREEAIEKAKREAEQKAREEREREKEKEKEREREREREREAERAAKASSS) adopt a coiled-coil conformation. At Lys-1150 the chain carries N6-acetyllysine. Residues 1154–1198 (KREEAIEKAKREAEQKAREEREREKEKEKEREREREREREAERAA) are compositionally biased toward basic and acidic residues. Residues 1154–1238 (KREEAIEKAK…TTIAAVPPYI (85 aa)) form a disordered region. At Tyr-1251 the chain carries Phosphotyrosine. Ser-1258 is subject to Phosphoserine.

Interacts with HDAC1 and ATN1. Interaction with ATN1 is improved when the poly-Gln region of ATN1 is extended. Interacts with FAT1.

Its subcellular location is the nucleus. The protein localises to the PML body. In terms of biological role, plays a role as a transcriptional repressor during development. May play a role in the control of cell survival. The chain is Arginine-glutamic acid dipeptide repeats protein (Rere) from Mus musculus (Mouse).